A 279-amino-acid polypeptide reads, in one-letter code: Type III pantothenate kinase (279 aa).

Residue 6 to 13 coordinates ATP; sequence DIGNTLSK. Substrate-binding positions include Y92 and 99 to 102; that span reads GVDR. The active-site Proton acceptor is the D101. D120 is a binding site for K(+). S123 provides a ligand contact to ATP. Residue T177 participates in substrate binding.

The protein belongs to the type III pantothenate kinase family. As to quaternary structure, homodimer. It depends on NH4(+) as a cofactor. Requires K(+) as cofactor.

It localises to the cytoplasm. It catalyses the reaction (R)-pantothenate + ATP = (R)-4'-phosphopantothenate + ADP + H(+). The protein operates within cofactor biosynthesis; coenzyme A biosynthesis; CoA from (R)-pantothenate: step 1/5. In terms of biological role, catalyzes the phosphorylation of pantothenate (Pan), the first step in CoA biosynthesis. The chain is Type III pantothenate kinase from Chromohalobacter salexigens (strain ATCC BAA-138 / DSM 3043 / CIP 106854 / NCIMB 13768 / 1H11).